The primary structure comprises 342 residues: Anthranilate phosphoribosyltransferase (342 aa).

5-phospho-alpha-D-ribose 1-diphosphate is bound by residues G90, 93–94 (GS), T98, 100–103 (NIST), 118–126 (KHGNRRATS), and S130. An anthranilate-binding site is contributed by G90. Position 102 (S102) interacts with Mg(2+). Residue N121 participates in anthranilate binding. Residue R176 participates in anthranilate binding. D235 and E236 together coordinate Mg(2+).

The protein belongs to the anthranilate phosphoribosyltransferase family. Homodimer. It depends on Mg(2+) as a cofactor.

It catalyses the reaction N-(5-phospho-beta-D-ribosyl)anthranilate + diphosphate = 5-phospho-alpha-D-ribose 1-diphosphate + anthranilate. Its pathway is amino-acid biosynthesis; L-tryptophan biosynthesis; L-tryptophan from chorismate: step 2/5. Catalyzes the transfer of the phosphoribosyl group of 5-phosphorylribose-1-pyrophosphate (PRPP) to anthranilate to yield N-(5'-phosphoribosyl)-anthranilate (PRA). This Rhodopirellula baltica (strain DSM 10527 / NCIMB 13988 / SH1) protein is Anthranilate phosphoribosyltransferase.